A 720-amino-acid polypeptide reads, in one-letter code: Engulfment and cell motility protein 3 (720 aa).

One can recognise an ELMO domain in the interval 307-479; the sequence is EQRDQLQALR…VVREQLARTL (173 aa). Positions 542–664 constitute a PH domain; it reads RLCEGMLFRK…TDGLSALLGS (123 aa). An SH3-binding motif is present at residues 696–706; it reads PEQPPPVPPPP.

As to quaternary structure, probably interacts directly with the SH3-domain of DOCK1 via its SH3-binding site. Part of a complex with DOCK1 and RAC1. Interacts with ADGRB3.

It localises to the cytoplasm. In terms of biological role, involved in cytoskeletal rearrangements required for phagocytosis of apoptotic cells and cell motility. Acts in association with DOCK1 and CRK. Was initially proposed to be required in complex with DOCK1 to activate Rac Rho small GTPases. May enhance the guanine nucleotide exchange factor (GEF) activity of DOCK1. The polypeptide is Engulfment and cell motility protein 3 (Elmo3) (Mus musculus (Mouse)).